The sequence spans 160 residues: UPF0260 protein GDI1595/Gdia_1801 (160 aa).

This sequence belongs to the UPF0260 family.

This is UPF0260 protein GDI1595/Gdia_1801 from Gluconacetobacter diazotrophicus (strain ATCC 49037 / DSM 5601 / CCUG 37298 / CIP 103539 / LMG 7603 / PAl5).